A 122-amino-acid polypeptide reads, in one-letter code: MLQELSVAKVADNSGAKEVGIIRNLGGSVKKSSNIGDVVICSVKKAIPNGIVKKGQVVKAVIVRTKYGIKRENGQHVSFDDNAVVIIKEDKSPRGTRVFGPVARELREKGYLKIVSLAPEVL.

Belongs to the universal ribosomal protein uL14 family. In terms of assembly, part of the 50S ribosomal subunit. Forms a cluster with proteins L3 and L19. In the 70S ribosome, L14 and L19 interact and together make contacts with the 16S rRNA in bridges B5 and B8.

Its function is as follows. Binds to 23S rRNA. Forms part of two intersubunit bridges in the 70S ribosome. This chain is Large ribosomal subunit protein uL14, found in Mycoplasmopsis pulmonis (strain UAB CTIP) (Mycoplasma pulmonis).